Here is a 145-residue protein sequence, read N- to C-terminus: 3-hydroxyacyl-[acyl-carrier-protein] dehydratase FabZ (145 aa).

H49 is a catalytic residue.

It belongs to the thioester dehydratase family. FabZ subfamily.

The protein localises to the cytoplasm. The catalysed reaction is a (3R)-hydroxyacyl-[ACP] = a (2E)-enoyl-[ACP] + H2O. Functionally, involved in unsaturated fatty acids biosynthesis. Catalyzes the dehydration of short chain beta-hydroxyacyl-ACPs and long chain saturated and unsaturated beta-hydroxyacyl-ACPs. The sequence is that of 3-hydroxyacyl-[acyl-carrier-protein] dehydratase FabZ from Anaplasma phagocytophilum (strain HZ).